The sequence spans 254 residues: Nickel import ATP-binding protein NikD (254 aa).

The ABC transporter domain occupies 2 to 241 (PQQIELRNIA…PKHAVTRSLV (240 aa)). ATP is bound at residue 36-43 (GGSGSGKS).

This sequence belongs to the ABC transporter superfamily. Nickel importer (TC 3.A.1.5.3) family. In terms of assembly, the complex is composed of two ATP-binding proteins (NikD and NikE), two transmembrane proteins (NikB and NikC) and a solute-binding protein (NikA).

It is found in the cell inner membrane. The enzyme catalyses Ni(2+)(out) + ATP + H2O = Ni(2+)(in) + ADP + phosphate + H(+). Functionally, part of the ABC transporter complex NikABCDE involved in nickel import. Responsible for energy coupling to the transport system. The protein is Nickel import ATP-binding protein NikD of Escherichia coli O157:H7.